The primary structure comprises 1031 residues: Beta-galactosidase (1031 aa).

Residues Asn-98 and Asp-197 each contribute to the substrate site. Asp-197 lines the Na(+) pocket. The Mg(2+) site is built by Glu-412, His-414, and Glu-457. Substrate contacts are provided by residues Glu-457 and 533-536; that span reads EYAH. The Proton donor role is filled by Glu-457. Glu-533 serves as the catalytic Nucleophile. Asn-593 provides a ligand contact to Mg(2+). Residues Phe-597 and Asp-600 each coordinate Na(+). Residues Asp-600 and Trp-1005 each coordinate substrate.

It belongs to the glycosyl hydrolase 2 family. As to quaternary structure, homotetramer. Requires Mg(2+) as cofactor. The cofactor is Na(+).

The enzyme catalyses Hydrolysis of terminal non-reducing beta-D-galactose residues in beta-D-galactosides.. The polypeptide is Beta-galactosidase (Oenococcus oeni (strain ATCC BAA-331 / PSU-1)).